Reading from the N-terminus, the 559-residue chain is Chromatin assembly factor 1 subunit B (559 aa).

WD repeat units lie at residues 11 to 54 (HNKE…DGKA), 64 to 103 (RHTK…EPEQ), 127 to 166 (GHLE…KISI), 169 to 208 (EHKS…VAFN), 228 to 279 (FHDD…RPIA), 299 to 340 (ELRP…PFGY), and 344 to 385 (IHYH…IPLK). Residues 386–559 (EKPVLNMRTP…NKGGTESLDP (174 aa)) are disordered. Thr-394 carries the post-translational modification Phosphothreonine. Ser-409 bears the Phosphoserine mark. The residue at position 419 (Thr-419) is a Phosphothreonine. Ser-429 carries the phosphoserine modification. Residues 430 to 444 (PGTTPPQARQAPAPT) show a composition bias toward low complexity. Position 433 is a phosphothreonine (Thr-433). Ser-458 carries the phosphoserine modification. A compositionally biased stretch (polar residues) spans 469–495 (LQPSSQNTKAHPSRRVTLNTLQAWSKT). Lys-494 bears the N6-acetyllysine mark. Phosphothreonine is present on residues Thr-495, Thr-509, Thr-521, and Thr-531. Residues 509-526 (TPPSSVPTSVISTPSTEE) show a composition bias toward low complexity. At Ser-538 the chain carries Phosphoserine. The span at 541–552 (ELKRPRLDENKG) shows a compositional bias: basic and acidic residues.

It belongs to the WD repeat HIR1 family. As to quaternary structure, subunit of the CAF-1 complex that contains RBBP4, CHAF1B and CHAF1A. CHAF1A binds directly to CHAF1B. Only minor amounts of RBBP4 are complexed with CHAF1A and CHAF1B in G1 phase. In G2 and S phase also monomeric CHAF1B is detected. Interacts with histones H3.1, H3.2 and H3.1t. In terms of processing, differentially phosphorylated during cell cycle. During mitosis the p60 subunit of inactive CAF-1 is hyperphosphorylated and displaced into the cytosol. Progressivly dephosphorylated from G1 to S and G2 phase. Phosphorylated p60 is recruited to chromatin undergoing DNA repair after UV irradiation in G1, S or G2 phases.

The protein resides in the nucleus. It localises to the cytoplasm. Acts as a component of the histone chaperone complex chromatin assembly factor 1 (CAF-1), which assembles histone octamers onto DNA during replication and repair. CAF-1 performs the first step of the nucleosome assembly process, bringing newly synthesized histones H3 and H4 to replicating DNA; histones H2A/H2B can bind to this chromatin precursor subsequent to DNA replication to complete the histone octamer. This chain is Chromatin assembly factor 1 subunit B, found in Homo sapiens (Human).